A 931-amino-acid chain; its full sequence is Isoleucine--tRNA ligase (931 aa).

The segment covering 1–14 (MDYSKTLNLPQTQF) has biased composition (polar residues). The disordered stretch occupies residues 1 to 25 (MDYSKTLNLPQTQFPMRGNLPQREP). A 'HIGH' region motif is present at residues 57-67 (PYANGHIHLGH). Residue glutamate 559 participates in L-isoleucyl-5'-AMP binding. The short motif at 600–604 (KMSKS) is the 'KMSKS' region element. Lysine 603 contributes to the ATP binding site. Residues cysteine 898, cysteine 901, cysteine 918, and cysteine 921 each contribute to the Zn(2+) site.

It belongs to the class-I aminoacyl-tRNA synthetase family. IleS type 1 subfamily. In terms of assembly, monomer. Requires Zn(2+) as cofactor.

It localises to the cytoplasm. It catalyses the reaction tRNA(Ile) + L-isoleucine + ATP = L-isoleucyl-tRNA(Ile) + AMP + diphosphate. Its function is as follows. Catalyzes the attachment of isoleucine to tRNA(Ile). As IleRS can inadvertently accommodate and process structurally similar amino acids such as valine, to avoid such errors it has two additional distinct tRNA(Ile)-dependent editing activities. One activity is designated as 'pretransfer' editing and involves the hydrolysis of activated Val-AMP. The other activity is designated 'posttransfer' editing and involves deacylation of mischarged Val-tRNA(Ile). The protein is Isoleucine--tRNA ligase of Desulforamulus reducens (strain ATCC BAA-1160 / DSM 100696 / MI-1) (Desulfotomaculum reducens).